The primary structure comprises 194 residues: tRNA (guanosine(18)-2'-O)-methyltransferase (194 aa).

S-adenosyl-L-methionine-binding positions include Thr-99, 122 to 126, Ile-142, and Leu-151; that span reads GAEKW.

The protein belongs to the class IV-like SAM-binding methyltransferase superfamily. RNA methyltransferase TrmH family. Monomer.

It catalyses the reaction guanosine(18) in tRNA + S-adenosyl-L-methionine = 2'-O-methylguanosine(18) in tRNA + S-adenosyl-L-homocysteine + H(+). Stimulated by magnesium ions and spermine. Inhibited by S-adenosyl-homocysteine. Functionally, catalyzes the 2'-O methylation of guanosine at position 18 in tRNA. The protein is tRNA (guanosine(18)-2'-O)-methyltransferase of Thermus thermophilus (strain ATCC BAA-163 / DSM 7039 / HB27).